The primary structure comprises 225 residues: Uracil-DNA glycosylase (225 aa).

D65 acts as the Proton acceptor in catalysis.

The protein belongs to the uracil-DNA glycosylase (UDG) superfamily. UNG family.

It is found in the cytoplasm. It carries out the reaction Hydrolyzes single-stranded DNA or mismatched double-stranded DNA and polynucleotides, releasing free uracil.. Excises uracil residues from the DNA which can arise as a result of misincorporation of dUMP residues by DNA polymerase or due to deamination of cytosine. The chain is Uracil-DNA glycosylase from Bacillus licheniformis (strain ATCC 14580 / DSM 13 / JCM 2505 / CCUG 7422 / NBRC 12200 / NCIMB 9375 / NCTC 10341 / NRRL NRS-1264 / Gibson 46).